Here is a 125-residue protein sequence, read N- to C-terminus: Glycine cleavage system H protein (125 aa).

The region spanning 19–101 is the Lipoyl-binding domain; sequence VGTVGISDYA…EGAAWFFKLT (83 aa). The residue at position 60 (Lys60) is an N6-lipoyllysine.

It belongs to the GcvH family. As to quaternary structure, the glycine cleavage system is composed of four proteins: P, T, L and H. It depends on (R)-lipoate as a cofactor.

In terms of biological role, the glycine cleavage system catalyzes the degradation of glycine. The H protein shuttles the methylamine group of glycine from the P protein to the T protein. The protein is Glycine cleavage system H protein of Paramagnetospirillum magneticum (strain ATCC 700264 / AMB-1) (Magnetospirillum magneticum).